The chain runs to 258 residues: Ribonuclease PH (258 aa).

Phosphate contacts are provided by residues Arg-88 and 126 to 128 (GTR).

The protein belongs to the RNase PH family. As to quaternary structure, homohexameric ring arranged as a trimer of dimers.

It catalyses the reaction tRNA(n+1) + phosphate = tRNA(n) + a ribonucleoside 5'-diphosphate. In terms of biological role, phosphorolytic 3'-5' exoribonuclease that plays an important role in tRNA 3'-end maturation. Removes nucleotide residues following the 3'-CCA terminus of tRNAs; can also add nucleotides to the ends of RNA molecules by using nucleoside diphosphates as substrates, but this may not be physiologically important. Probably plays a role in initiation of 16S rRNA degradation (leading to ribosome degradation) during starvation. The chain is Ribonuclease PH from Mycobacteroides abscessus (strain ATCC 19977 / DSM 44196 / CCUG 20993 / CIP 104536 / JCM 13569 / NCTC 13031 / TMC 1543 / L948) (Mycobacterium abscessus).